Consider the following 297-residue polypeptide: Alpha-tubulin N-acetyltransferase 1 (297 aa).

The N-acetyltransferase domain maps to 1–184; sequence MDFPYDLNAL…NNFVVFAGFF (184 aa). Residues 118–131 and 154–163 contribute to the acetyl-CoA site; these read FYVTETLQRHGYGS and SPKFLSFLEK. Positions 226 to 297 are disordered; the sequence is FVRPGGPPHS…SLNRSRLSFH (72 aa). The span at 230–240 shows a compositional bias: pro residues; sequence GGPPHSPPLLP. Positions 241-264 are enriched in low complexity; sequence SSPQSRSLSVGSSPSRAPLRPAAA. 2 stretches are compositionally biased toward polar residues: residues 266-278 and 286-297; these read VLQQGQTPSSPLN and TSSLNRSRLSFH.

Belongs to the acetyltransferase ATAT1 family. As to quaternary structure, monomer.

It is found in the cytoplasm. The protein localises to the membrane. It localises to the clathrin-coated pit. The protein resides in the cell junction. Its subcellular location is the focal adhesion. It is found in the cell projection. The protein localises to the axon. It localises to the cytoskeleton. The protein resides in the spindle. The enzyme catalyses L-lysyl-[alpha-tubulin] + acetyl-CoA = N(6)-acetyl-L-lysyl-[alpha-tubulin] + CoA + H(+). Specifically acetylates 'Lys-40' in alpha-tubulin on the lumenal side of microtubules. Promotes microtubule destabilization and accelerates microtubule dynamics; this activity may be independent of acetylation activity. Acetylates alpha-tubulin with a slow enzymatic rate, due to a catalytic site that is not optimized for acetyl transfer. Enters the microtubule through each end and diffuses quickly throughout the lumen of microtubules. Acetylates only long/old microtubules because of its slow acetylation rate since it does not have time to act on dynamically unstable microtubules before the enzyme is released. May be involved in neuron development. Acetylates alpha-tubulin in neurons, but not in cilia. The polypeptide is Alpha-tubulin N-acetyltransferase 1 (Danio rerio (Zebrafish)).